The sequence spans 273 residues: Dermonecrotic toxin LsaSicTox-alphaIB1aii (273 aa).

The active site involves H5. 2 residues coordinate Mg(2+): E25 and D27. H41 (nucleophile) is an active-site residue. Intrachain disulfides connect C45/C51 and C47/C190. D85 serves as a coordination point for Mg(2+).

Belongs to the arthropod phospholipase D family. Class II subfamily. The cofactor is Mg(2+). Expressed by the venom gland.

It localises to the secreted. It catalyses the reaction an N-(acyl)-sphingosylphosphocholine = an N-(acyl)-sphingosyl-1,3-cyclic phosphate + choline. The enzyme catalyses an N-(acyl)-sphingosylphosphoethanolamine = an N-(acyl)-sphingosyl-1,3-cyclic phosphate + ethanolamine. It carries out the reaction a 1-acyl-sn-glycero-3-phosphocholine = a 1-acyl-sn-glycero-2,3-cyclic phosphate + choline. The catalysed reaction is a 1-acyl-sn-glycero-3-phosphoethanolamine = a 1-acyl-sn-glycero-2,3-cyclic phosphate + ethanolamine. Dermonecrotic toxins cleave the phosphodiester linkage between the phosphate and headgroup of certain phospholipids (sphingolipid and lysolipid substrates), forming an alcohol (often choline) and a cyclic phosphate. This toxin acts on sphingomyelin (SM). It may also act on ceramide phosphoethanolamine (CPE), lysophosphatidylcholine (LPC) and lysophosphatidylethanolamine (LPE), but not on lysophosphatidylserine (LPS), and lysophosphatidylglycerol (LPG). It acts by transphosphatidylation, releasing exclusively cyclic phosphate products as second products. Induces dermonecrosis, hemolysis, increased vascular permeability, edema, inflammatory response, and platelet aggregation. This Loxosceles sabina (Tucson recluse spider) protein is Dermonecrotic toxin LsaSicTox-alphaIB1aii.